We begin with the raw amino-acid sequence, 141 residues long: Large ribosomal subunit protein uL11 (141 aa).

It belongs to the universal ribosomal protein uL11 family. As to quaternary structure, part of the ribosomal stalk of the 50S ribosomal subunit. Interacts with L10 and the large rRNA to form the base of the stalk. L10 forms an elongated spine to which L12 dimers bind in a sequential fashion forming a multimeric L10(L12)X complex. One or more lysine residues are methylated.

Forms part of the ribosomal stalk which helps the ribosome interact with GTP-bound translation factors. The polypeptide is Large ribosomal subunit protein uL11 (Lactobacillus acidophilus (strain ATCC 700396 / NCK56 / N2 / NCFM)).